The sequence spans 139 residues: ATP synthase epsilon chain (139 aa).

A disordered region spans residues 89 to 110; it reads EARAEQARAEAEARRREAQSER.

This sequence belongs to the ATPase epsilon chain family. In terms of assembly, F-type ATPases have 2 components, CF(1) - the catalytic core - and CF(0) - the membrane proton channel. CF(1) has five subunits: alpha(3), beta(3), gamma(1), delta(1), epsilon(1). CF(0) has three main subunits: a, b and c.

The protein localises to the cell membrane. In terms of biological role, produces ATP from ADP in the presence of a proton gradient across the membrane. In Chloroflexus aurantiacus (strain ATCC 29366 / DSM 635 / J-10-fl), this protein is ATP synthase epsilon chain.